The primary structure comprises 659 residues: Polyamine transporter 4 (659 aa).

2 stretches are compositionally biased toward polar residues: residues 1-20 and 28-45; these read MPSSLTKTESNSDPRTNIQQ and NVTNSGNLDSTSSSTGSI. Positions 1–81 are disordered; sequence MPSSLTKTES…LDWDGPDDPD (81 aa). At 1 to 99 the chain is on the cytoplasmic side; that stretch reads MPSSLTKTES…KKWYTTMTSA (99 aa). The chain crosses the membrane as a helical span at residues 100-120; that stretch reads FLCLVVTMGSSLYVSSVPELV. Over 121 to 128 the chain is Extracellular; the sequence is ERYHVSQT. The chain crosses the membrane as a helical span at residues 129 to 149; that stretch reads LALAGLTFYLLGLSTVIGAPL. The Cytoplasmic segment spans residues 150–157; the sequence is SEVFGRKP. A helical membrane pass occupies residues 158–178; that stretch reads VYLFSLPVSMLFTMGVGLSNG. At 179–187 the chain is on the extracellular side; sequence HMRIILPLR. A helical transmembrane segment spans residues 188 to 208; the sequence is FLSGVFASPALSVGSGTILDI. Over 209-215 the chain is Cytoplasmic; that stretch reads FDVDQVS. Residues 216 to 236 traverse the membrane as a helical segment; that stretch reads VAMTYFVLSPFLGPVLSPIMA. At 237-246 the chain is on the extracellular side; that stretch reads GFATEAKGWR. The helical transmembrane segment at 247-267 threads the bilayer; it reads WSEWIQLIAGGLILPFIALMP. At 268-316 the chain is on the cytoplasmic side; it reads ETHKGIILRKRAKKRNIALKKFSREAQKEFLKTTVTITILRPLKMLVVE. A helical membrane pass occupies residues 317 to 337; it reads PIVFVFSVYVAFIFAILFGFF. At 338–355 the chain is on the extracellular side; it reads EAYAVIYRGVYHMSMGIS. Residues 356–376 traverse the membrane as a helical segment; that stretch reads GLPFIGIGVGLWIGAFFYLYI. At 377 to 423 the chain is on the cytoplasmic side; sequence DRKYLFPKPPAGTQPLTEKERTSKRTTPYRGARDAETGELLPVVPEK. The interval 387–408 is disordered; that stretch reads AGTQPLTEKERTSKRTTPYRGA. Residues 424–444 form a helical membrane-spanning segment; it reads FLIACKFGSVALPIGLFWQAW. Over 445–456 the chain is Extracellular; it reads TARSDVHWMAPV. Residues 457–477 form a helical membrane-spanning segment; the sequence is AAGVPFGFGLILIFFSVLMYF. The Cytoplasmic portion of the chain corresponds to 478-486; the sequence is STCYPPLTV. The chain crosses the membrane as a helical span at residues 487-509; sequence ASCLAANNLLRYVMSSVFPLFTI. At 510–518 the chain is on the extracellular side; it reads QMYTKMKIK. A helical membrane pass occupies residues 519–539; sequence WASTLFALVCVVMIPIPWVFE. Over 540-659 the chain is Cytoplasmic; the sequence is KWGSKLRHKS…MATDASARMV (120 aa). Positions 587–602 are enriched in basic and acidic residues; that stretch reads METDPSTREKPGERLS. The disordered stretch occupies residues 587 to 631; sequence METDPSTREKPGERLSLRRTHTQPVPASFDREDGQHAQNRNEPIS. T589, T606, and T608 each carry phosphothreonine. Polar residues predominate over residues 622-631; the sequence is HAQNRNEPIS. Residues S633 and S646 each carry the phosphoserine modification.

Belongs to the major facilitator superfamily. DHA1 family. Polyamines/proton antiporter (TC 2.A.1.2.16) subfamily.

It localises to the cell membrane. Functionally, cell membrane polyamine/proton antiporter, involved in the detoxification of excess polyamines in the cytoplasm. Recognizes spermidine, spermine and the antimalarial drug quinidine, but not quinine, chloroquine and mefloquine. The polypeptide is Polyamine transporter 4 (TPO4) (Saccharomyces cerevisiae (strain ATCC 204508 / S288c) (Baker's yeast)).